The sequence spans 88 residues: LYR motif-containing protein 2 (88 aa).

A mitochondrion-targeting transit peptide spans 1–19; it reads MAASRLPPATLTLKQFMRR.

It belongs to the complex I LYR family.

The protein localises to the mitochondrion. Involved in efficient integration of the N-module into mitochondrial respiratory chain complex I. The protein is LYR motif-containing protein 2 (Lyrm2) of Rattus norvegicus (Rat).